The primary structure comprises 104 residues: Pyrimidine/purine nucleoside phosphorylase (104 aa).

This sequence belongs to the nucleoside phosphorylase PpnP family.

The catalysed reaction is a purine D-ribonucleoside + phosphate = a purine nucleobase + alpha-D-ribose 1-phosphate. It catalyses the reaction adenosine + phosphate = alpha-D-ribose 1-phosphate + adenine. It carries out the reaction cytidine + phosphate = cytosine + alpha-D-ribose 1-phosphate. The enzyme catalyses guanosine + phosphate = alpha-D-ribose 1-phosphate + guanine. The catalysed reaction is inosine + phosphate = alpha-D-ribose 1-phosphate + hypoxanthine. It catalyses the reaction thymidine + phosphate = 2-deoxy-alpha-D-ribose 1-phosphate + thymine. It carries out the reaction uridine + phosphate = alpha-D-ribose 1-phosphate + uracil. The enzyme catalyses xanthosine + phosphate = alpha-D-ribose 1-phosphate + xanthine. In terms of biological role, catalyzes the phosphorolysis of diverse nucleosides, yielding D-ribose 1-phosphate and the respective free bases. Can use uridine, adenosine, guanosine, cytidine, thymidine, inosine and xanthosine as substrates. Also catalyzes the reverse reactions. The sequence is that of Pyrimidine/purine nucleoside phosphorylase from Leptothrix cholodnii (strain ATCC 51168 / LMG 8142 / SP-6) (Leptothrix discophora (strain SP-6)).